The primary structure comprises 657 residues: Broad substrate specificity ATP-binding cassette transporter ABCG2 (657 aa).

The segment at 1–24 is disordered; the sequence is MSSSNDHVLVPMSQRNNNGLPRTN. At 1–393 the chain is on the cytoplasmic side; sequence MSSSNDHVLV…SFKNLLGNPQ (393 aa). Over residues 13–24 the composition is skewed to polar residues; it reads SQRNNNGLPRTN. Residues 48-285 form the ABC transporter domain; that stretch reads VKSGFLVRKT…FASAGYHCEP (238 aa). ATP-binding positions include 79-86, 183-189, Glu210, and His242; these read GPTGGGKS and RGISGGE. The ABC transmembrane type-2 domain occupies 389–653; that stretch reads LGNPQASVAQ…TIAYLKLLFL (265 aa). A helical transmembrane segment spans residues 394 to 414; that stretch reads ASVAQLIVTVILGLIIGAIYF. Residues 415 to 428 lie on the Extracellular side of the membrane; sequence DLKYDAAGMQNRAG. The chain crosses the membrane as a helical span at residues 429–449; the sequence is VLFFLTTNQCFSSVSAVELFV. At 450-477 the chain is on the cytoplasmic side; it reads VEKKLFIHEYISGYYRVSSYFFGKVMSD. Residues 478–498 traverse the membrane as a helical segment; sequence LLPMRFLPSVIFTCVLYFMLG. Residues 499 to 506 lie on the Extracellular side of the membrane; that stretch reads LKKTVDAF. Residues 507–527 traverse the membrane as a helical segment; the sequence is FIMMFTLIMVAYTASSMALAI. The Cytoplasmic portion of the chain corresponds to 528–535; sequence ATGQSVVS. A helical transmembrane segment spans residues 536–556; sequence VATLLMTIAFVFMMLFSGLLV. The Extracellular portion of the chain corresponds to 557–632; sequence NLRTIGPWLS…LSPWGLWKNH (76 aa). A disulfide bond links Cys592 and Cys610. N-linked (GlcNAc...) asparagine glycans are attached at residues Asn596 and Asn600. A helical transmembrane segment spans residues 633–653; that stretch reads VALACMIIIFLTIAYLKLLFL. Over 654–657 the chain is Cytoplasmic; the sequence is KKYS.

The protein belongs to the ABC transporter superfamily. ABCG family. Eye pigment precursor importer (TC 3.A.1.204) subfamily. Homodimer; disulfide-linked. The minimal functional unit is a homodimer, but the major oligomeric form in plasma membrane is a homotetramer with possibility of higher order oligomerization up to homododecamers. Post-translationally, N-glycosylated. Glycosylation-deficient ABCG2 is normally expressed and functional. Phosphorylated. Phosphorylation may regulate the localization to the plasma membrane, the homooligomerization and therefore, the activity of the transporter. In terms of tissue distribution, highly expressed in kidney. Lower expression in liver, colon, heart, spleen, and placenta. Expressed in mammary gland. Expressed in intestinal villi and renal proximal tubules, hepatic bile canalicular membranes, and placental labyrinth cells (at protein level).

It is found in the cell membrane. Its subcellular location is the apical cell membrane. The protein localises to the mitochondrion membrane. It carries out the reaction ATP + H2O + xenobioticSide 1 = ADP + phosphate + xenobioticSide 2.. It catalyses the reaction riboflavin(in) + ATP + H2O = riboflavin(out) + ADP + phosphate + H(+). The catalysed reaction is pheophorbide a(in) + ATP + H2O = pheophorbide a(out) + ADP + phosphate + H(+). The enzyme catalyses urate(in) + ATP + H2O = urate(out) + ADP + phosphate + H(+). It carries out the reaction indoxyl sulfate(in) + ATP + H2O = indoxyl sulfate(out) + ADP + phosphate + H(+). It catalyses the reaction sphing-4-enine 1-phosphate(in) + ATP + H2O = sphing-4-enine 1-phosphate(out) + ADP + phosphate + H(+). The catalysed reaction is estrone 3-sulfate(in) + ATP + H2O = estrone 3-sulfate(out) + ADP + phosphate + H(+). The enzyme catalyses dehydroepiandrosterone 3-sulfate(in) + ATP + H2O = dehydroepiandrosterone 3-sulfate(out) + ADP + phosphate + H(+). It carries out the reaction 4-methylumbelliferone sulfate(in) + ATP + H2O = 4-methylumbelliferone sulfate(out) + ADP + phosphate + H(+). It catalyses the reaction 5,7-dimethyl-2-methylamino-4-(3-pyridylmethyl)-1,3-benzothiazol-6-yl beta-D-glucuronate(in) + ATP + H2O = 5,7-dimethyl-2-methylamino-4-(3-pyridylmethyl)-1,3-benzothiazol-6-yl beta-D-glucuronate(out) + ADP + phosphate + H(+). The catalysed reaction is 4-methylumbelliferone beta-D-glucuronate(in) + ATP + H2O = 4-methylumbelliferone beta-D-glucuronate(out) + ADP + phosphate + H(+). The enzyme catalyses 5,7-dimethyl-2-methylamino-4-(3-pyridylmethyl)-1,3-benzothiazol-6-yl sulfate(in) + ATP + H2O = 5,7-dimethyl-2-methylamino-4-(3-pyridylmethyl)-1,3-benzothiazol-6-yl sulfate(out) + ADP + phosphate + H(+). It carries out the reaction 17beta-estradiol 17-O-(beta-D-glucuronate)(in) + ATP + H2O = 17beta-estradiol 17-O-(beta-D-glucuronate)(out) + ADP + phosphate + H(+). It catalyses the reaction methotrexate(in) + ATP + H2O = methotrexate(out) + ADP + phosphate + H(+). The catalysed reaction is itaconate(in) + ATP + H2O = itaconate(out) + ADP + phosphate + H(+). With respect to regulation, specifically inhibited by the fungal toxin fumitremorgin C and Ko143. Broad substrate specificity ATP-dependent transporter of the ATP-binding cassette (ABC) family that actively extrudes a wide variety of physiological compounds, dietary toxins and xenobiotics from cells. Involved in porphyrin homeostasis, mediating the export of protoporphyrin IX (PPIX) from both mitochondria to cytosol and cytosol to extracellular space, it also functions in the cellular export of heme. Also mediates the efflux of sphingosine-1-P from cells. Acts as a urate exporter functioning in both renal and extrarenal urate excretion. In kidney, it also functions as a physiological exporter of the uremic toxin indoxyl sulfate. Also involved in the excretion of steroids like estrone 3-sulfate/E1S, 3beta-sulfooxy-androst-5-en-17-one/DHEAS, and other sulfate conjugates. Mediates the secretion of the riboflavin and biotin vitamins into milk. Extrudes pheophorbide a, a phototoxic porphyrin catabolite of chlorophyll, reducing its bioavailability. Plays an important role in the exclusion of xenobiotics from the brain. It confers to cells a resistance to multiple drugs and other xenobiotics including mitoxantrone, pheophorbide, camptothecin, methotrexate, azidothymidine, and the anthracyclines daunorubicin and doxorubicin, through the control of their efflux. In placenta, it limits the penetration of drugs from the maternal plasma into the fetus. May play a role in early stem cell self-renewal by blocking differentiation. In inflammatory macrophages, exports itaconate from the cytosol to the extracellular compartment and limits the activation of TFEB-dependent lysosome biogenesis involved in antibacterial innate immune response. This chain is Broad substrate specificity ATP-binding cassette transporter ABCG2 (Abcg2), found in Mus musculus (Mouse).